The chain runs to 812 residues: Probable beta-glucosidase D (812 aa).

A signal peptide spans 1-18 (MRVPSLSVLSFLLGTALA). 2 N-linked (GlcNAc...) asparagine glycosylation sites follow: asparagine 53 and asparagine 188. Residues 186-248 (ETNRTGGMGG…GMGGGMAGSS (63 aa)) form a disordered region. Over residues 191-207 (GGMGGGGGAPGGGGMGR) the composition is skewed to gly residues. Residues 211–225 (FSSSVPGGMSPTSSA) show a composition bias toward polar residues. Residues 236–245 (GGSGMGGGMA) show a composition bias toward gly residues. The N-linked (GlcNAc...) asparagine glycan is linked to asparagine 296. Residue aspartate 324 is part of the active site. Residues asparagine 360, asparagine 384, asparagine 422, asparagine 501, asparagine 592, and asparagine 646 are each glycosylated (N-linked (GlcNAc...) asparagine).

This sequence belongs to the glycosyl hydrolase 3 family.

It localises to the secreted. The enzyme catalyses Hydrolysis of terminal, non-reducing beta-D-glucosyl residues with release of beta-D-glucose.. The protein operates within glycan metabolism; cellulose degradation. Beta-glucosidases are one of a number of cellulolytic enzymes involved in the degradation of cellulosic biomass. Catalyzes the last step releasing glucose from the inhibitory cellobiose. In Emericella nidulans (strain FGSC A4 / ATCC 38163 / CBS 112.46 / NRRL 194 / M139) (Aspergillus nidulans), this protein is Probable beta-glucosidase D (bglD).